A 142-amino-acid chain; its full sequence is Ribonuclease VapC44 (142 aa).

The PINc domain occupies 4 to 126 (LLDVNVLLAL…GRFVTFDQSI (123 aa)). Mg(2+) contacts are provided by Asp-6 and Asp-105.

Belongs to the PINc/VapC protein family. Mg(2+) is required as a cofactor.

In terms of biological role, toxic component of a type II toxin-antitoxin (TA) system. An RNase. Its cognate antitoxin is VapB44. The chain is Ribonuclease VapC44 from Mycobacterium tuberculosis (strain CDC 1551 / Oshkosh).